Reading from the N-terminus, the 80-residue chain is CLAVATA3/ESR (CLE)-related protein 14 (80 aa).

The first 26 residues, 1–26 (MKVWSQRLSFLIVMIFILAGLHSSSA), serve as a signal peptide directing secretion. A hydroxyproline mark is found at P71 and P74. P74 carries O-linked (Ara...) hydroxyproline glycosylation.

The protein belongs to the CLV3/ESR signal peptide family. In terms of assembly, interacts with the extracellular leucine-rich repeat region of CLV2 and PEPR2. In terms of processing, the O-glycosylation (arabinosylation) of the hydroxyproline Pro-74 enhances binding affinity of the CLE14p peptide for its receptor. Mostly expressed in roots, and, to a lower extent, in seedlings and leaves. Expressed in the primary root tip under Pi deficiency.

It is found in the secreted. The protein localises to the extracellular space. Its function is as follows. Extracellular signal peptide that regulates cell fate. Represses root apical meristem maintenance. Acts as an elicitor of the root meristem differentiation through the CLV2/CRN complex signaling pathway. Inhibits irreversibly root growth by reducing cell division rates in the root apical meristem. Regulates the transition of protophloem cells from proliferation to differentiation, thus impinging on postembryonic growth capacity of the root meristem; this signaling pathway requires CRN and CLV2. The protein is CLAVATA3/ESR (CLE)-related protein 14 of Arabidopsis thaliana (Mouse-ear cress).